A 153-amino-acid chain; its full sequence is Histone H2B.3 (153 aa).

Basic and acidic residues-rich tracts occupy residues Met-1 to Pro-28 and Glu-36 to Lys-53. Residues Met-1 to Lys-61 form a disordered region. N6-acetyllysine is present on residues Lys-7 and Lys-37. A Glycyl lysine isopeptide (Lys-Gly) (interchain with G-Cter in ubiquitin) cross-link involves residue Lys-149.

This sequence belongs to the histone H2B family. In terms of assembly, the nucleosome is a histone octamer containing two molecules each of H2A, H2B, H3 and H4 assembled in one H3-H4 heterotetramer and two H2A-H2B heterodimers. The octamer wraps approximately 147 bp of DNA. In terms of processing, can be acetylated to form H2BK6ac and H2BK33ac. Monoubiquitinated by BRE1 to form H2BK143ub1 and deubiquitinated by UBP26. Required for heterochromatic histone H3 di- and trimethylation at H3K4me. May give a specific tag for epigenetic transcriptional activation.

The protein localises to the nucleus. It localises to the chromosome. Its function is as follows. Core component of nucleosome. Nucleosomes wrap and compact DNA into chromatin, limiting DNA accessibility to the cellular machineries which require DNA as a template. Histones thereby play a central role in transcription regulation, DNA repair, DNA replication and chromosomal stability. DNA accessibility is regulated via a complex set of post-translational modifications of histones, also called histone code, and nucleosome remodeling. The sequence is that of Histone H2B.3 (H2B.3) from Oryza sativa subsp. japonica (Rice).